The chain runs to 186 residues: Ribosome-recycling factor (186 aa).

Belongs to the RRF family.

The protein localises to the cytoplasm. Responsible for the release of ribosomes from messenger RNA at the termination of protein biosynthesis. May increase the efficiency of translation by recycling ribosomes from one round of translation to another. The polypeptide is Ribosome-recycling factor (Cupriavidus taiwanensis (strain DSM 17343 / BCRC 17206 / CCUG 44338 / CIP 107171 / LMG 19424 / R1) (Ralstonia taiwanensis (strain LMG 19424))).